A 406-amino-acid chain; its full sequence is Succinylornithine transaminase (406 aa).

Position 252 is an N6-(pyridoxal phosphate)lysine (Lys252).

Belongs to the class-III pyridoxal-phosphate-dependent aminotransferase family. AstC subfamily. Requires pyridoxal 5'-phosphate as cofactor.

The catalysed reaction is N(2)-succinyl-L-ornithine + 2-oxoglutarate = N-succinyl-L-glutamate 5-semialdehyde + L-glutamate. It participates in amino-acid degradation; L-arginine degradation via AST pathway; L-glutamate and succinate from L-arginine: step 3/5. Catalyzes the transamination of N(2)-succinylornithine and alpha-ketoglutarate into N(2)-succinylglutamate semialdehyde and glutamate. Can also act as an acetylornithine aminotransferase. This Escherichia fergusonii (strain ATCC 35469 / DSM 13698 / CCUG 18766 / IAM 14443 / JCM 21226 / LMG 7866 / NBRC 102419 / NCTC 12128 / CDC 0568-73) protein is Succinylornithine transaminase.